Here is a 337-residue protein sequence, read N- to C-terminus: Protein BIG GRAIN 1-like (337 aa).

3 disordered regions span residues 1-32 (MRDM…PSFS), 120-163 (SAAG…RPAS), and 179-233 (KRPS…ARPS). Over residues 137–146 (HEQPDVEKTA) the composition is skewed to basic and acidic residues. Composition is skewed to low complexity over residues 150–163 (PGSA…RPAS), 195–209 (PACS…SSYA), and 219–230 (RTPPTTTTTARA).

The protein belongs to the BIG GRAIN 1 (BG1) plant protein family.

The protein resides in the cell membrane. Involved in auxin transport. Regulator of the auxin signaling pathway. The polypeptide is Protein BIG GRAIN 1-like (Oryza sativa subsp. indica (Rice)).